A 431-amino-acid chain; its full sequence is Keratin, type I cytoskeletal 40 (431 aa).

Positions 1 to 89 (MASDCSPTGC…CEDGVFNSNE (89 aa)) are head. Residues 89-400 (EKETMQFLND…GLLDSEDSRL (312 aa)) form the IF rod domain. Residues 90-124 (KETMQFLNDRLASYLEKVRGLEELNAELECRIREQ) form a coil 1A region. Residues 125 to 135 (CEEDVPLVCPD) are linker 1. Residues 136 to 236 (YQCYFDTIED…HEEEVNVLRG (101 aa)) are coil 1B. A linker 12 region spans residues 237 to 252 (QLGDRLSVELDTAPTT). The interval 253–396 (DLNRVLDEMR…NTYQGLLDSE (144 aa)) is coil 2. A tail region spans residues 397-431 (DSRLPCNPCSATSMSNDTCEPCSAYVICTVENSCP).

This sequence belongs to the intermediate filament family. Heterotetramer of two type I and two type II keratins.

Functionally, may play a role in late hair differentiation. This Bos taurus (Bovine) protein is Keratin, type I cytoskeletal 40 (KRT40).